Consider the following 329-residue polypeptide: Beta-ketoacyl-[acyl-carrier-protein] synthase III (329 aa).

Catalysis depends on residues Cys-123 and His-256. Residues 257–261 form an ACP-binding region; sequence QANIR. Asn-286 is an active-site residue.

This sequence belongs to the thiolase-like superfamily. FabH family. In terms of assembly, homodimer.

It is found in the cytoplasm. The catalysed reaction is malonyl-[ACP] + acetyl-CoA + H(+) = 3-oxobutanoyl-[ACP] + CO2 + CoA. The protein operates within lipid metabolism; fatty acid biosynthesis. In terms of biological role, catalyzes the condensation reaction of fatty acid synthesis by the addition to an acyl acceptor of two carbons from malonyl-ACP. Catalyzes the first condensation reaction which initiates fatty acid synthesis and may therefore play a role in governing the total rate of fatty acid production. Possesses both acetoacetyl-ACP synthase and acetyl transacylase activities. Its substrate specificity determines the biosynthesis of branched-chain and/or straight-chain of fatty acids. In Burkholderia lata (strain ATCC 17760 / DSM 23089 / LMG 22485 / NCIMB 9086 / R18194 / 383), this protein is Beta-ketoacyl-[acyl-carrier-protein] synthase III.